The primary structure comprises 177 residues: Large ribosomal subunit protein uL6 (177 aa).

Belongs to the universal ribosomal protein uL6 family. In terms of assembly, part of the 50S ribosomal subunit.

Functionally, this protein binds to the 23S rRNA, and is important in its secondary structure. It is located near the subunit interface in the base of the L7/L12 stalk, and near the tRNA binding site of the peptidyltransferase center. This is Large ribosomal subunit protein uL6 from Mannheimia succiniciproducens (strain KCTC 0769BP / MBEL55E).